The sequence spans 149 residues: Nucleoside deoxyribosyltransferase (149 aa).

The Nucleophile role is filled by Glu90.

This sequence belongs to the nucleoside deoxyribosyltransferase family.

It carries out the reaction 2-deoxy-D-ribosyl-base(1) + base(2) = 2-deoxy-D-ribosyl-base(2) + base(1).. It participates in nucleotide metabolism; nucleotide salvage pathway. In terms of biological role, catalyzes the cleavage of the glycosidic bond of 2'-deoxyribonucleosides and the transfer of the deoxyribosyl moiety to an acceptor purine or pyrimidine base. The polypeptide is Nucleoside deoxyribosyltransferase (ntd) (Lactobacillus johnsonii (strain CNCM I-12250 / La1 / NCC 533)).